The primary structure comprises 160 residues: Putative NrdI-like protein (160 aa).

This sequence belongs to the NrdI family.

In Streptococcus pyogenes serotype M6 (strain ATCC BAA-946 / MGAS10394), this protein is Putative NrdI-like protein.